A 299-amino-acid polypeptide reads, in one-letter code: Recombination-associated protein RdgC (299 aa).

It belongs to the RdgC family.

It localises to the cytoplasm. The protein localises to the nucleoid. Its function is as follows. May be involved in recombination. The chain is Recombination-associated protein RdgC from Cupriavidus pinatubonensis (strain JMP 134 / LMG 1197) (Cupriavidus necator (strain JMP 134)).